The chain runs to 133 residues: Nickel-responsive regulator (133 aa).

Residues H76, H87, H89, and C95 each coordinate Ni(2+).

It belongs to the transcriptional regulatory CopG/NikR family. As to quaternary structure, homotetramer. Ni(2+) is required as a cofactor.

In terms of biological role, transcriptional repressor of the nikABCDE operon. Is active in the presence of excessive concentrations of intracellular nickel. This chain is Nickel-responsive regulator, found in Escherichia fergusonii (strain ATCC 35469 / DSM 13698 / CCUG 18766 / IAM 14443 / JCM 21226 / LMG 7866 / NBRC 102419 / NCTC 12128 / CDC 0568-73).